A 330-amino-acid chain; its full sequence is RNA polymerase sigma factor RpoS (330 aa).

Positions 56–89 are sigma-70 factor domain-1; it reads DATQLYLGEIGYSPLLTAEEEVYFARRALRGDVA. The sigma-70 factor domain-2 stretch occupies residues 94 to 164; sequence MIESNLRLVV…ERAIMNQTRT (71 aa). The Interaction with polymerase core subunit RpoC motif lies at 118–121; it reads DLIE. A sigma-70 factor domain-3 region spans residues 174-249; the sequence is ELNVYLRTAR…DEKENGPEDT (76 aa). Positions 262 to 315 are sigma-70 factor domain-4; the sequence is WLFELNAKQREVLARRFGLLGYEAATLEDVGREIGLTRERVRQIQVEGLRRLRE. The segment at residues 288 to 307 is a DNA-binding region (H-T-H motif); sequence LEDVGREIGLTRERVRQIQV.

It belongs to the sigma-70 factor family. RpoS subfamily. Interacts with the RNA polymerase core enzyme.

Its subcellular location is the cytoplasm. Sigma factors are initiation factors that promote the attachment of RNA polymerase to specific initiation sites and are then released. This sigma factor is the master transcriptional regulator of the stationary phase and the general stress response. This Salmonella dublin protein is RNA polymerase sigma factor RpoS.